The following is a 412-amino-acid chain: L-threonine:uridine-5'-aldehyde transaldolase (412 aa).

The residue at position 229 (lysine 229) is an N6-(pyridoxal phosphate)lysine.

It belongs to the SHMT family. Pyridoxal 5'-phosphate is required as a cofactor.

The enzyme catalyses uridine-5'-aldehyde + L-threonine = (5'S,6'S)-C-glycyluridine + acetaldehyde. It functions in the pathway antibiotic biosynthesis. Its function is as follows. Transaldolase involved in the biosynthesis of the capuramycin-type nucleoside antibiotic A-102395. Catalyzes the condensation of L-threonine and uridine-5'-aldehyde to form 5'-C-glycyluridine (GlyU). This Amycolatopsis sp protein is L-threonine:uridine-5'-aldehyde transaldolase.